Reading from the N-terminus, the 419-residue chain is Glutamate-1-semialdehyde 2,1-aminomutase (419 aa).

At lysine 259 the chain carries N6-(pyridoxal phosphate)lysine.

Belongs to the class-III pyridoxal-phosphate-dependent aminotransferase family. HemL subfamily. It depends on pyridoxal 5'-phosphate as a cofactor.

It is found in the cytoplasm. It catalyses the reaction (S)-4-amino-5-oxopentanoate = 5-aminolevulinate. The protein operates within porphyrin-containing compound metabolism; protoporphyrin-IX biosynthesis; 5-aminolevulinate from L-glutamyl-tRNA(Glu): step 2/2. The protein is Glutamate-1-semialdehyde 2,1-aminomutase (hemL) of Sulfurisphaera tokodaii (strain DSM 16993 / JCM 10545 / NBRC 100140 / 7) (Sulfolobus tokodaii).